We begin with the raw amino-acid sequence, 711 residues long: Interferon-induced GTP-binding protein Mx2 (711 aa).

Disordered stretches follow at residues 1–26 (MPKP…HKEM) and 62–88 (MLTL…NLYS). Residues 66 to 82 (SPQQPGGKSGQQTSKGP) show a composition bias toward low complexity. One can recognise a Dynamin-type G domain in the interval 112–383 (DLALPTIAVI…LIGHISKSLP (272 aa)). Residues 122 to 129 (GDQSSGKS) form a G1 motif region. A GTP-binding site is contributed by 122 to 129 (GDQSSGKS). A G2 motif region spans residues 147 to 149 (ITR). Positions 221 to 224 (DLPG) are G3 motif. Residues 221–225 (DLPGI) and 290–293 (TKPD) contribute to the GTP site. Positions 290–293 (TKPD) are G4 motif. Positions 322–325 (KCRG) are G5 motif. A GED domain is found at 619-710 (ITEIGVHVNA…TLSKFAQSLQ (92 aa)).

Belongs to the TRAFAC class dynamin-like GTPase superfamily. Dynamin/Fzo/YdjA family. As to expression, ubiquitous.

The protein localises to the cytoplasm. Its subcellular location is the nucleus. Functionally, interferon-induced dynamin-like GTPase with antiviral activity against influenza virus A (FLUAV). In Sus scrofa (Pig), this protein is Interferon-induced GTP-binding protein Mx2 (MX2).